The primary structure comprises 787 residues: Probable basic-leucine zipper transcription factor J (787 aa).

Over residues 18–90 (NSNIHNNTHN…NNTQNTNNGT (73 aa)) the composition is skewed to low complexity. 6 disordered regions span residues 18–95 (NSNI…LTPL), 153–173 (LNLSSTGNHEDPVQVPMNNNP), 186–306 (LQSQ…NNNT), 343–372 (DSLLNQTLNNNNNNNNNNNNNNNNTTIQTS), 401–441 (LSSA…NNSN), and 473–507 (ASSESAQSESSQESDYDALNERNSGVKKRGRDEDQ). Low complexity-rich tracts occupy residues 186 to 223 (LQSQNNNSSNNNNNNNNNGSNTPLNGSNGSNNNYSSPI), 235 to 258 (SSPIQEYPYYSPSSSPHSNESTSP), 273 to 305 (NNNNNNNNNNNNNNNNNNNNNNNNNNKNNLNNN), and 351 to 366 (NNNNNNNNNNNNNNNN). Residues 473–483 (ASSESAQSESS) are compositionally biased toward low complexity. The bZIP domain maps to 549–612 (ELKKQRRLVK…KALKKQLYSL (64 aa)). The segment at 551–603 (KKQRRLVKNREYASQSRSRRKIYVENIETKLQKTNQDCASIKSQLNSVKEENK) is basic motif. The interval 605 to 612 (LKKQLYSL) is leucine-zipper. 2 disordered regions span residues 723-747 (SNYIINNNNNESTSETTTNNKVVST) and 763-787 (DKEVPQKCKDSSDLKCDSPPLSPLN). Residues 763-778 (DKEVPQKCKDSSDLKC) show a composition bias toward basic and acidic residues.

It belongs to the bZIP family.

The protein localises to the nucleus. In terms of biological role, probable transcriptional regulator. The protein is Probable basic-leucine zipper transcription factor J (bzpJ) of Dictyostelium discoideum (Social amoeba).